A 186-amino-acid chain; its full sequence is ATP synthase subunit delta (186 aa).

The protein belongs to the ATPase delta chain family. As to quaternary structure, F-type ATPases have 2 components, F(1) - the catalytic core - and F(0) - the membrane proton channel. F(1) has five subunits: alpha(3), beta(3), gamma(1), delta(1), epsilon(1). F(0) has three main subunits: a(1), b(2) and c(10-14). The alpha and beta chains form an alternating ring which encloses part of the gamma chain. F(1) is attached to F(0) by a central stalk formed by the gamma and epsilon chains, while a peripheral stalk is formed by the delta and b chains.

It localises to the cell inner membrane. F(1)F(0) ATP synthase produces ATP from ADP in the presence of a proton or sodium gradient. F-type ATPases consist of two structural domains, F(1) containing the extramembraneous catalytic core and F(0) containing the membrane proton channel, linked together by a central stalk and a peripheral stalk. During catalysis, ATP synthesis in the catalytic domain of F(1) is coupled via a rotary mechanism of the central stalk subunits to proton translocation. In terms of biological role, this protein is part of the stalk that links CF(0) to CF(1). It either transmits conformational changes from CF(0) to CF(1) or is implicated in proton conduction. This is ATP synthase subunit delta from Bacteroides fragilis (strain ATCC 25285 / DSM 2151 / CCUG 4856 / JCM 11019 / LMG 10263 / NCTC 9343 / Onslow / VPI 2553 / EN-2).